The following is a 426-amino-acid chain: Serine--tRNA ligase (426 aa).

Residue 233–235 (TSE) participates in L-serine binding. 264 to 266 (RAE) lines the ATP pocket. Residue Glu287 coordinates L-serine. ATP is bound at residue 351–354 (EISS). An L-serine-binding site is contributed by Ser387.

Belongs to the class-II aminoacyl-tRNA synthetase family. Type-1 seryl-tRNA synthetase subfamily. As to quaternary structure, homodimer. The tRNA molecule binds across the dimer.

The protein localises to the cytoplasm. It catalyses the reaction tRNA(Ser) + L-serine + ATP = L-seryl-tRNA(Ser) + AMP + diphosphate + H(+). The catalysed reaction is tRNA(Sec) + L-serine + ATP = L-seryl-tRNA(Sec) + AMP + diphosphate + H(+). It participates in aminoacyl-tRNA biosynthesis; selenocysteinyl-tRNA(Sec) biosynthesis; L-seryl-tRNA(Sec) from L-serine and tRNA(Sec): step 1/1. Its function is as follows. Catalyzes the attachment of serine to tRNA(Ser). Is also able to aminoacylate tRNA(Sec) with serine, to form the misacylated tRNA L-seryl-tRNA(Sec), which will be further converted into selenocysteinyl-tRNA(Sec). The sequence is that of Serine--tRNA ligase from Stenotrophomonas maltophilia (strain R551-3).